A 215-amino-acid polypeptide reads, in one-letter code: Redox-sensing transcriptional repressor Rex (215 aa).

The H-T-H motif DNA-binding region spans 18–57 (LYHRYLKYLDESGKERVSSAELSEAVKVDSATIRRDFSYF). 92–97 (GVGNLG) contacts NAD(+).

This sequence belongs to the transcriptional regulatory Rex family. In terms of assembly, homodimer.

The protein localises to the cytoplasm. Modulates transcription in response to changes in cellular NADH/NAD(+) redox state. The protein is Redox-sensing transcriptional repressor Rex of Listeria innocua serovar 6a (strain ATCC BAA-680 / CLIP 11262).